A 58-amino-acid polypeptide reads, in one-letter code: Large ribosomal subunit protein uL24 (58 aa).

It belongs to the universal ribosomal protein uL24 family. In terms of assembly, part of the 50S ribosomal subunit.

In terms of biological role, one of two assembly initiator proteins, it binds directly to the 5'-end of the 23S rRNA, where it nucleates assembly of the 50S subunit. One of the proteins that surrounds the polypeptide exit tunnel on the outside of the subunit. This Spiroplasma citri protein is Large ribosomal subunit protein uL24 (rplX).